A 265-amino-acid chain; its full sequence is UPF0354 protein BH3252 (265 aa).

Belongs to the UPF0354 family.

In Halalkalibacterium halodurans (strain ATCC BAA-125 / DSM 18197 / FERM 7344 / JCM 9153 / C-125) (Bacillus halodurans), this protein is UPF0354 protein BH3252.